The sequence spans 102 residues: RNA-binding protein Hfq (102 aa).

The Sm domain maps to 9–68 (DPFLNALRRERVPVSIYLVNGIKLQGQIESFDQFVILLKNTVSQMVYKHAISTVVPSRPV). The tract at residues 63–102 (VPSRPVSHHSNNAGGGSSNYHHGGSAQGSSAPQQDSDDAE) is disordered. Low complexity predominate over residues 70 to 86 (HHSNNAGGGSSNYHHGG).

Belongs to the Hfq family. Homohexamer.

RNA chaperone that binds small regulatory RNA (sRNAs) and mRNAs to facilitate mRNA translational regulation in response to envelope stress, environmental stress and changes in metabolite concentrations. Also binds with high specificity to tRNAs. This Klebsiella pneumoniae (strain 342) protein is RNA-binding protein Hfq.